Reading from the N-terminus, the 770-residue chain is Mitochondrial 15S rRNA processing factor CCM1 (770 aa).

The transit peptide at 1–90 (MIRLILWNNV…RSFTKVIAQH (90 aa)) directs the protein to the mitochondrion. Disordered stretches follow at residues 28–67 (NKRK…GSIA) and 90–114 (HLKP…LPPI). Basic and acidic residues predominate over residues 43–53 (NRKDGDIEPYR). Positions 55-65 (TDQNQTPNTGS) are enriched in polar residues. PPR repeat units lie at residues 276–310 (KIDH…NIEI), 311–346 (SKMI…SQKT), 349–383 (DEKV…GMNV), 384–419 (NQNL…GWVP), and 420–454 (NLQT…NSVT). Positions 588–598 (RQDEPTEKATT) are enriched in basic and acidic residues. The disordered stretch occupies residues 588-610 (RQDEPTEKATTTEEQITSSEPDT). Polar residues predominate over residues 599–610 (TEEQITSSEPDT). Residues 636-666 (DSYLYNLAIKAAGKFKDYSFAQQILHERGQF) form a PPR 6 repeat.

This sequence belongs to the CCM1 family. Binds to mitochondrial small subunit 15S rRNA.

The protein resides in the mitochondrion. Functionally, regulates mitochondrial small subunit maturation by controlling 15S rRNA 5'-end processing. Localizes to the 5' precursor of the 15S rRNA in a position that is subsequently occupied by mS47 in the mature yeast mtSSU. Uses structure and sequence-specific RNA recognition, binding to a single-stranded region of the precursor and specifically recognizing bases -6 to -1. The exchange of Ccm1 for mS47 is coupled to the irreversible removal of precursor rRNA that is accompanied by conformational changes of the mitoribosomal proteins uS5m and mS26. These conformational changes signal completion of 5'-end rRNA processing through protection of the mature 5'-end of the 15S rRNA and stabilization of mS47. The removal of the 5' precursor together with the dissociation of Ccm1 may be catalyzed by the 5'-3' exoribonuclease Pet127. Involved in the specific removal of group I introns in mitochondrial encoded transcripts. In Candida albicans (strain WO-1) (Yeast), this protein is Mitochondrial 15S rRNA processing factor CCM1 (CCM1).